Reading from the N-terminus, the 138-residue chain is LAVCVSLIGAANIPPQHLNLYQFKEMIRYTIPCEKTWLEYTDYGCYCGYGGSGTPVDALDRCCYVHDNCYGDAEKKHKCNPKMQLYSYKLTKRTIICYGAAGTCERIVCDCDRTAALCFGNSEYIERHKNIDTKRYCR.

The N-terminal stretch at 1–10 (LAVCVSLIGA) is a signal peptide. The propeptide occupies 11-18 (ANIPPQHL). 6 cysteine pairs are disulfide-bonded: cysteine 45-cysteine 137, cysteine 47-cysteine 63, cysteine 62-cysteine 118, cysteine 69-cysteine 111, cysteine 79-cysteine 104, and cysteine 97-cysteine 109. Residues tyrosine 46, glycine 48, and glycine 50 each coordinate Ca(2+). Histidine 66 is an active-site residue. Aspartate 67 is a binding site for Ca(2+). Residue aspartate 112 is part of the active site.

Belongs to the phospholipase A2 family. Group I subfamily. D49 sub-subfamily. In terms of assembly, heterodimer; disulfide-linked. The A chains have phospholipase A2 activity and the B chains show homology with the basic protease inhibitors. It depends on Ca(2+) as a cofactor. In terms of tissue distribution, expressed by the venom gland.

The protein resides in the secreted. It catalyses the reaction a 1,2-diacyl-sn-glycero-3-phosphocholine + H2O = a 1-acyl-sn-glycero-3-phosphocholine + a fatty acid + H(+). In terms of biological role, snake venom phospholipase A2 (PLA2) that inhibits neuromuscular transmission by blocking acetylcholine release from the nerve termini. PLA2 catalyzes the calcium-dependent hydrolysis of the 2-acyl groups in 3-sn-phosphoglycerides. The polypeptide is Basic phospholipase A2 beta-bungarotoxin A-AL3 chain (Bungarus multicinctus (Many-banded krait)).